A 95-amino-acid chain; its full sequence is Envelope glycoprotein N (95 aa).

The signal sequence occupies residues 1-26 (MGLMDIHNAVCSLVIGVAILIATSQA). Over 27-55 (TFVDWGSSITSMGDFWESTCSAVGVSIAF) the chain is Virion surface. A helical transmembrane segment spans residues 56–76 (SSGFSVLFYMGLVAVISALLA). Residues 77–95 (GSYHACFRLFTADMFKEEW) are Intravirion-facing.

The protein belongs to the herpesviridae glycoprotein N family. Interacts (via N-terminus) with gM (via N-terminus). The gM-gN heterodimer forms the gCII complex.

The protein localises to the virion membrane. The protein resides in the host membrane. Its subcellular location is the host Golgi apparatus. It localises to the host trans-Golgi network. Functionally, envelope glycoprotein necessary for proper maturation of gM and modulation of its membrane fusion activity. Also plays a critical role in virion morphogenesis. The protein is Envelope glycoprotein N of Gallus gallus (Chicken).